The primary structure comprises 96 residues: UPF0235 protein MK0273 (96 aa).

It belongs to the UPF0235 family.

In Methanopyrus kandleri (strain AV19 / DSM 6324 / JCM 9639 / NBRC 100938), this protein is UPF0235 protein MK0273.